A 177-amino-acid chain; its full sequence is KxDL motif-containing protein 1 (177 aa).

Methionine 1 is subject to N-acetylmethionine. The tract at residues 92 to 177 (ARQHPEAFSH…TDDEEETREE (86 aa)) is disordered. Polar residues predominate over residues 119-145 (SITTTIATSEQSTGSCDTSPDTASPSF).

Belongs to the KXD1 family. Component of the BLOC-one-related complex (BORC) which is composed of BLOC1S1, BLOC1S2, BORCS5, BORCS6, BORCS7, BORCS8, KXD1 and SNAPIN. Associates with the BLOC-1 complex. Interacts with BLOC1S1. Interacts with DTNBP1/BLOC1S7 (via coiled-coil domain).

It localises to the lysosome membrane. Its function is as follows. As part of the BORC complex may play a role in lysosomes movement and localization at the cell periphery. Associated with the cytosolic face of lysosomes, the BORC complex may recruit ARL8B and couple lysosomes to microtubule plus-end-directed kinesin motor. May also be involved in the biogenesis of lysosome-related organelles such as melanosomes. The chain is KxDL motif-containing protein 1 (Kxd1) from Rattus norvegicus (Rat).